Here is a 431-residue protein sequence, read N- to C-terminus: Probable indole-3-pyruvate monooxygenase YUCCA7 (431 aa).

Position 36-41 (36-41 (GAGPSG)) interacts with FAD. 207 to 212 (GCGNSG) contacts NADP(+).

The protein belongs to the FMO family. FAD is required as a cofactor. As to expression, expressed in shoot apex regions and siliques, and at high levels in roots. Detected in flowers, stems and leaves.

The catalysed reaction is indole-3-pyruvate + NADPH + O2 + H(+) = (indol-3-yl)acetate + CO2 + NADP(+) + H2O. Its pathway is plant hormone metabolism; auxin biosynthesis. Functionally, involved in auxin biosynthesis. Belongs to the set of redundant YUCCA genes probably responsible for auxin biosynthesis in roots. This is Probable indole-3-pyruvate monooxygenase YUCCA7 (YUC7) from Arabidopsis thaliana (Mouse-ear cress).